The sequence spans 199 residues: Peptidyl-tRNA hydrolase (199 aa).

Tyr18 provides a ligand contact to tRNA. His23 serves as the catalytic Proton acceptor. Residues Tyr69, Asn71, and Asn117 each contribute to the tRNA site.

Belongs to the PTH family. Monomer.

The protein resides in the cytoplasm. The enzyme catalyses an N-acyl-L-alpha-aminoacyl-tRNA + H2O = an N-acyl-L-amino acid + a tRNA + H(+). Functionally, hydrolyzes ribosome-free peptidyl-tRNAs (with 1 or more amino acids incorporated), which drop off the ribosome during protein synthesis, or as a result of ribosome stalling. Its function is as follows. Catalyzes the release of premature peptidyl moieties from peptidyl-tRNA molecules trapped in stalled 50S ribosomal subunits, and thus maintains levels of free tRNAs and 50S ribosomes. The protein is Peptidyl-tRNA hydrolase of Prochlorococcus marinus (strain MIT 9515).